A 130-amino-acid chain; its full sequence is Small ribosomal subunit protein uS9 (130 aa).

Belongs to the universal ribosomal protein uS9 family.

The polypeptide is Small ribosomal subunit protein uS9 (rpsI) (Haemophilus influenzae (strain ATCC 51907 / DSM 11121 / KW20 / Rd)).